The primary structure comprises 1612 residues: DNA topoisomerase 2-beta (1612 aa).

At A2 the chain carries N-acetylalanine. K3 carries the post-translational modification N6-acetyllysine. Residues K21 and K22 each participate in a glycyl lysine isopeptide (Lys-Gly) (interchain with G-Cter in SUMO2) cross-link. ATP is bound by residues N100, N129, and 157-159 (SSN). Residues K165 and K166 each participate in a glycyl lysine isopeptide (Lys-Gly) (interchain with G-Cter in SUMO2) cross-link. ATP is bound at residue 170-177 (GRNGYGAK). Glycyl lysine isopeptide (Lys-Gly) (interchain with G-Cter in SUMO2) cross-links involve residues K216 and K287. The tract at residues 351–353 (KKK) is interaction with DNA. Residues K355 and K361 each participate in a glycyl lysine isopeptide (Lys-Gly) (interchain with G-Cter in SUMO2) cross-link. An ATP-binding site is contributed by 385 to 387 (QTK). Residues K425, K427, and K434 each participate in a glycyl lysine isopeptide (Lys-Gly) (interchain with G-Cter in SUMO2) cross-link. Residues 464 to 581 (CTLILTEGDS…SLLKHGFLEE (118 aa)) form the Toprim domain. 3 residues coordinate Mg(2+): E470, D550, and D552. Glycyl lysine isopeptide (Lys-Gly) (interchain with G-Cter in SUMO2) cross-links involve residues K588, K593, K623, K631, K634, K664, and K700. Positions 724-1177 (IPSLVDGFKP…SPSDLWKEDL (454 aa)) constitute a Topo IIA-type catalytic domain. The O-(5'-phospho-DNA)-tyrosine intermediate role is filled by Y814. The segment at 999-1008 (KLQTTLTCNS) is interaction with DNA. A Glycyl lysine isopeptide (Lys-Gly) (interchain with G-Cter in SUMO2) cross-link involves residue K1080. The tract at residues 1098-1128 (AWKEAQEKAAEEEDTQNQHDDSSSDSGTPSG) is disordered. Glycyl lysine isopeptide (Lys-Gly) (interchain with G-Cter in SUMO2) cross-links involve residues K1202, K1205, K1214, and K1215. Position 1224 is a phosphoserine (S1224). Residues K1238, K1250, and K1259 each participate in a glycyl lysine isopeptide (Lys-Gly) (interchain with G-Cter in SUMO2) cross-link. A disordered region spans residues 1245–1586 (LLKKKKGDPD…FTSEPPALPR (342 aa)). T1280 carries the post-translational modification Phosphothreonine. Residues K1311 and K1315 each participate in a glycyl lysine isopeptide (Lys-Gly) (interchain with G-Cter in SUMO2) cross-link. Basic and acidic residues-rich tracts occupy residues 1322-1332 (PWSDDESKSES) and 1346-1358 (SLLR…RPKY). Phosphoserine occurs at positions 1324, 1328, 1330, 1332, and 1346. At Y1358 the chain carries Phosphotyrosine. Over residues 1362–1379 (FSEEEEEDADDDDDNNDL) the composition is skewed to acidic residues. S1363 carries the post-translational modification Phosphoserine. K1385 is covalently cross-linked (Glycyl lysine isopeptide (Lys-Gly) (interchain with G-Cter in SUMO2)). Residue S1387 is modified to Phosphoserine. A Phosphothreonine modification is found at T1390. S1400 bears the Phosphoserine mark. Y1408 carries the post-translational modification Phosphotyrosine. At S1411 the chain carries Phosphoserine. Basic and acidic residues predominate over residues 1417-1429 (ATPEKSSHDKKSQ). K1427 is covalently cross-linked (Glycyl lysine isopeptide (Lys-Gly) (interchain with G-Cter in SUMO2)). 3 positions are modified to phosphoserine: S1428, S1439, and S1441. A Glycyl lysine isopeptide (Lys-Gly) (interchain with G-Cter in SUMO2) cross-link involves residue K1443. The span at 1443–1453 (KSEDDSAKFDS) shows a compositional bias: basic and acidic residues. A phosphoserine mark is found at S1448, S1453, and S1460. A Glycyl lysine isopeptide (Lys-Gly) (interchain with G-Cter in SUMO2) cross-link involves residue K1477. The tract at residues 1493-1499 (KAKRAPK) is interaction with PLSCR1. Residues S1509, S1511, and S1513 each carry the phosphoserine modification. Basic residues predominate over residues 1526–1536 (GKGRGAKKRKA). 2 positions are modified to phosphoserine: S1537 and S1539. Residues 1550–1561 (KPSKTASKKPKK) are compositionally biased toward basic residues. At T1562 the chain carries Phosphothreonine. Phosphoserine is present on residues S1563 and S1568. Position 1596 is a phosphotyrosine (Y1596). S1600 bears the Phosphoserine mark.

It belongs to the type II topoisomerase family. Homodimer. Interacts with PLSCR1 and KIAA1210. It depends on Mg(2+) as a cofactor. Mn(2+) is required as a cofactor. Requires Ca(2+) as cofactor.

Its subcellular location is the nucleus. It is found in the nucleolus. It localises to the nucleoplasm. It catalyses the reaction ATP-dependent breakage, passage and rejoining of double-stranded DNA.. Key decatenating enzyme that alters DNA topology by binding to two double-stranded DNA molecules, generating a double-stranded break in one of the strands, passing the intact strand through the broken strand, and religating the broken strand. The chain is DNA topoisomerase 2-beta (TOP2B) from Cricetulus longicaudatus (Long-tailed dwarf hamster).